Consider the following 388-residue polypeptide: Nocturnin (388 aa).

E152 serves as a coordination point for Mg(2+). Substrate-binding positions include E152, 176 to 178 (KPW), N220, 243 to 246 (HLKA), 281 to 283 (DFN), and H371.

This sequence belongs to the CCR4/nocturin family. Mg(2+) serves as cofactor. Expressed only in the photoreceptors of the retina. Expression is controlled by the retinal circadian clock.

The protein resides in the cytoplasm. It is found in the nucleus. The protein localises to the perinuclear region. It localises to the mitochondrion. It catalyses the reaction NADP(+) + H2O = phosphate + NAD(+). The enzyme catalyses NADPH + H2O = phosphate + NADH. Functionally, phosphatase which catalyzes the conversion of NADP(+) to NAD(+) and of NADPH to NADH. Shows a small preference for NADPH over NADP(+). Component of the circadian clock or downstream effector of clock function. Exhibits a high amplitude circadian rhythm with maximal levels in early evening. In constant darkness or constant light, the amplitude of the rhythm decreases. The chain is Nocturnin from Xenopus laevis (African clawed frog).